The primary structure comprises 151 residues: Large ribosomal subunit protein bL17 (151 aa).

The protein belongs to the bacterial ribosomal protein bL17 family. In terms of assembly, part of the 50S ribosomal subunit. Contacts protein L32.

The sequence is that of Large ribosomal subunit protein bL17 from Chlorobium limicola (strain DSM 245 / NBRC 103803 / 6330).